The following is a 124-amino-acid chain: Holo-[acyl-carrier-protein] synthase (124 aa).

Residues aspartate 8 and glutamate 56 each contribute to the Mg(2+) site.

The protein belongs to the P-Pant transferase superfamily. AcpS family. The cofactor is Mg(2+).

It localises to the cytoplasm. The enzyme catalyses apo-[ACP] + CoA = holo-[ACP] + adenosine 3',5'-bisphosphate + H(+). Its function is as follows. Transfers the 4'-phosphopantetheine moiety from coenzyme A to a Ser of acyl-carrier-protein. This is Holo-[acyl-carrier-protein] synthase from Clostridium acetobutylicum (strain ATCC 824 / DSM 792 / JCM 1419 / IAM 19013 / LMG 5710 / NBRC 13948 / NRRL B-527 / VKM B-1787 / 2291 / W).